A 372-amino-acid polypeptide reads, in one-letter code: Secreted beta-glucosidase SIM1 (372 aa).

The first 15 residues, 1–15 (MKYLTLLTVLSTALA), serve as a signal peptide directing secretion. Positions 51-85 (VTENASSGASSGETAETIQTRSSSDVSSSSDSNPV) are disordered. Positions 52–85 (TENASSGASSGETAETIQTRSSSDVSSSSDSNPV) are enriched in low complexity. Residues Asn-54 and Asn-351 are each glycosylated (N-linked (GlcNAc...) asparagine).

It belongs to the SUN family.

It localises to the secreted. It is found in the cell wall. In terms of biological role, cell surface beta-glucosidase involved in cell wall maintenance and cytokinesis. Plays a role redundant to SUN41. The protein is Secreted beta-glucosidase SIM1 (SIM1) of Candida albicans (strain SC5314 / ATCC MYA-2876) (Yeast).